A 433-amino-acid chain; its full sequence is Serine hydroxymethyltransferase (433 aa).

(6S)-5,6,7,8-tetrahydrofolate-binding positions include L132 and 136-138 (GHL). Residue K241 is modified to N6-(pyridoxal phosphate)lysine.

It belongs to the SHMT family. Homodimer. Requires pyridoxal 5'-phosphate as cofactor.

The protein localises to the cytoplasm. It carries out the reaction (6R)-5,10-methylene-5,6,7,8-tetrahydrofolate + glycine + H2O = (6S)-5,6,7,8-tetrahydrofolate + L-serine. It participates in one-carbon metabolism; tetrahydrofolate interconversion. The protein operates within amino-acid biosynthesis; glycine biosynthesis; glycine from L-serine: step 1/1. Functionally, catalyzes the reversible interconversion of serine and glycine with tetrahydrofolate (THF) serving as the one-carbon carrier. This reaction serves as the major source of one-carbon groups required for the biosynthesis of purines, thymidylate, methionine, and other important biomolecules. Also exhibits THF-independent aldolase activity toward beta-hydroxyamino acids, producing glycine and aldehydes, via a retro-aldol mechanism. This Rhodopseudomonas palustris (strain BisA53) protein is Serine hydroxymethyltransferase.